Consider the following 236-residue polypeptide: MSYSDPNQNPIPETYAPSNSTESEKLKLYQAFIFSVPICFTFIVLFVLYVIYLRRNSTTNVDWSSLGMRGGTFVPTNNNLSTAELGLSKDIREMLPVVIYKESFIVKDSQCSVCLGDYQAEEKLQQMPSCGHTFHMECIDLWLTSHTTCPLCRLSLIPKPSLDLSHQSTEIVSSIENSNGGEASTQPDSQSATEAISHTDDVEEGNRDSQEVSKETEENDRNSVGTSDGCCTCRLG.

A helical membrane pass occupies residues 31-51; sequence AFIFSVPICFTFIVLFVLYVI. The segment at 111–153 adopts an RING-type; atypical zinc-finger fold; that stretch reads CSVCLGDYQAEEKLQQMPSCGHTFHMECIDLWLTSHTTCPLCR. Positions 176–196 are enriched in polar residues; the sequence is ENSNGGEASTQPDSQSATEAI. The disordered stretch occupies residues 176 to 236; sequence ENSNGGEAST…SDGCCTCRLG (61 aa). Over residues 197–221 the composition is skewed to basic and acidic residues; it reads SHTDDVEEGNRDSQEVSKETEENDR.

It belongs to the RING-type zinc finger family. ATL subfamily.

It localises to the membrane. The enzyme catalyses S-ubiquitinyl-[E2 ubiquitin-conjugating enzyme]-L-cysteine + [acceptor protein]-L-lysine = [E2 ubiquitin-conjugating enzyme]-L-cysteine + N(6)-ubiquitinyl-[acceptor protein]-L-lysine.. The protein operates within protein modification; protein ubiquitination. This Arabidopsis thaliana (Mouse-ear cress) protein is RING-H2 finger protein ATL7 (ATL7).